A 983-amino-acid polypeptide reads, in one-letter code: Protein CLASP-3 (983 aa).

2 disordered regions span residues Tyr356 to Ala393 and Ser666 to Ser690. Positions Arg359–Thr372 are enriched in low complexity. The stretch at Ile918–His956 is one HEAT repeat.

It belongs to the CLASP family.

It is found in the cytoplasm. Its subcellular location is the cytoskeleton. Its function is as follows. Microtubule plus-end tracking protein that promotes the stabilization of dynamic microtubules. This is Protein CLASP-3 (cls-3) from Caenorhabditis elegans.